The sequence spans 257 residues: Spindlin-2C (257 aa).

Residues 1–47 (MKTPHKKGAAKEQMGEGVGHHIGSTTIKKKKASQKRQRSRSSSRRSI) are disordered. Over residues 27–43 (IKKKKASQKRQRSRSSS) the composition is skewed to basic residues. 3 tudor-like domain regions span residues 48–97 (VGCR…LELH), 127–176 (IGKA…YQLL), and 208–253 (IGKH…YDLV). Histone H3K4me3 and H3R8me2a binding stretches follow at residues E136 and 244-246 (DFH).

This sequence belongs to the SPIN/STSY family. Interacts with C11orf84/SPINDOC.

Its subcellular location is the nucleus. May be involved in the regulation of cell cycle progression. Exhibits H3K4me3-binding activity. This is Spindlin-2C (Spin2c) from Mus musculus (Mouse).